The sequence spans 274 residues: NADPH-dependent 7-cyano-7-deazaguanine reductase (274 aa).

80-82 (VES) contacts substrate. 82–83 (SK) contacts NADPH. C181 serves as the catalytic Thioimide intermediate. D188 acts as the Proton donor in catalysis. 220 to 221 (HE) provides a ligand contact to substrate. Residue 249–250 (RG) coordinates NADPH.

This sequence belongs to the GTP cyclohydrolase I family. QueF type 2 subfamily. As to quaternary structure, homodimer.

It is found in the cytoplasm. The enzyme catalyses 7-aminomethyl-7-carbaguanine + 2 NADP(+) = 7-cyano-7-deazaguanine + 2 NADPH + 3 H(+). The protein operates within tRNA modification; tRNA-queuosine biosynthesis. Its function is as follows. Catalyzes the NADPH-dependent reduction of 7-cyano-7-deazaguanine (preQ0) to 7-aminomethyl-7-deazaguanine (preQ1). In Burkholderia thailandensis (strain ATCC 700388 / DSM 13276 / CCUG 48851 / CIP 106301 / E264), this protein is NADPH-dependent 7-cyano-7-deazaguanine reductase.